The following is a 2627-amino-acid chain: Telomerase protein component 1 (2627 aa).

4 TEP1 N-terminal repeats span residues 1 to 30 (MEKL…DLQP), 31 to 60 (LEKL…DLKT), 61 to 90 (MEKP…DLKT), and 91 to 120 (MEKP…SLKS). Disordered stretches follow at residues 193–214 (FDSE…SLGE) and 383–402 (RKHR…GMEP). Residues 223–676 (VKLTSGDSES…VKHSLPLLPG (454 aa)) enclose the TROVE domain. A compositionally biased stretch (basic residues) spans 383–395 (RKHRAKRHPRRPP). The 329-residue stretch at 1162–1490 (RLSLVTGQSG…PLERPGARLC (329 aa)) folds into the NACHT domain. Position 1168–1175 (1168–1175 (GQSGQGKT)) interacts with ATP. 19 WD repeats span residues 1411 to 1448 (VLPQ…TKSW), 1674 to 1713 (AVSS…EEKS), 1716 to 1754 (SGCD…RVLQ), 1757 to 1796 (AHQY…LAFQ), 1798 to 1837 (TYPK…VTKD), 1840 to 1879 (APGA…RLAA), 1882 to 1921 (AHHG…PRGH), 1925 to 1964 (LSLS…QGAQ), 1967 to 2005 (ALDV…LQSL), 2008 to 2047 (LSRF…RPHK), 2059 to 2098 (GHEG…TPVL), 2105 to 2143 (CHRD…RLGQ), 2146 to 2183 (GHQS…LTSI), 2185 to 2233 (AHSG…QTHT), 2236 to 2275 (GHSG…DDTC), 2278 to 2317 (RSSA…ATAQ), 2319 to 2355 (PGHI…GSAP), 2368 to 2417 (EDLG…PMIL), and 2459 to 2500 (NPSR…GEWT). Polar residues predominate over residues 2506–2522 (QKKANTPETQTPGTDPS). The disordered stretch occupies residues 2506–2551 (QKKANTPETQTPGTDPSTCRESDASMDSDASMDSEPTPHLKTRQRR). WD repeat units lie at residues 2553–2590 (IHSG…LLGL) and 2592–2626 (RCEG…FLNW).

As to quaternary structure, associated component of the telomerase holoenzyme complex. Component of the vault ribonucleoprotein particle, at least composed of MVP, PARP4 and one or more vault RNAs (vRNAs). Binds to VAULTRC1, VAULTRC2 and VAULTRC4/hvg4 vRNAs. In terms of tissue distribution, ubiquitous.

It localises to the nucleus. Its subcellular location is the chromosome. The protein localises to the telomere. Its function is as follows. Component of the telomerase ribonucleoprotein complex that is essential for the replication of chromosome termini. Also a component of the ribonucleoprotein vaults particle, a multi-subunit structure involved in nucleo-cytoplasmic transport. Responsible for the localizing and stabilizing vault RNA (vRNA) association in the vault ribonucleoprotein particle. Binds to TERC. This is Telomerase protein component 1 (TEP1) from Homo sapiens (Human).